The primary structure comprises 209 residues: Guanylate kinase (209 aa).

One can recognise a Guanylate kinase-like domain in the interval 9-188 (GIMLVISSPS…SVHQIKCIFT (180 aa)). Residue 16–23 (SPSGGGKT) coordinates ATP.

It belongs to the guanylate kinase family.

It localises to the cytoplasm. The catalysed reaction is GMP + ATP = GDP + ADP. Essential for recycling GMP and indirectly, cGMP. The chain is Guanylate kinase from Ehrlichia canis (strain Jake).